The sequence spans 439 residues: Phosphoribosylamine--glycine ligase (439 aa).

An ATP-grasp domain is found at 109–317 (REFMERNKIP…LVEISERIID (209 aa)). 136 to 195 (IDEFGKPVVVKPLGLTGGKGVKVVGYQLKDNEEAKEYAEYLIRKDGKVLIEERTDGVEFT) lines the ATP pocket. Mg(2+) is bound by residues Gln275, Glu287, and Asn289. Positions 275, 287, and 289 each coordinate Mn(2+).

This sequence belongs to the GARS family. It depends on Mg(2+) as a cofactor. Requires Mn(2+) as cofactor.

The catalysed reaction is 5-phospho-beta-D-ribosylamine + glycine + ATP = N(1)-(5-phospho-beta-D-ribosyl)glycinamide + ADP + phosphate + H(+). Its pathway is purine metabolism; IMP biosynthesis via de novo pathway; N(1)-(5-phospho-D-ribosyl)glycinamide from 5-phospho-alpha-D-ribose 1-diphosphate: step 2/2. This Pyrococcus furiosus (strain ATCC 43587 / DSM 3638 / JCM 8422 / Vc1) protein is Phosphoribosylamine--glycine ligase.